The chain runs to 320 residues: Atrochrysone carboxyl ACP thioesterase (320 aa).

H103, H105, D107, and H108 together coordinate Zn(2+). D107 serves as the catalytic Proton donor/acceptor.

This sequence belongs to the metallo-beta-lactamase superfamily. The cofactor is Zn(2+).

The catalysed reaction is atrochrysone carboxyl-[ACP] + H2O = atrochrysone carboxylate + holo-[ACP] + H(+). The protein operates within secondary metabolite biosynthesis. Its function is as follows. Atrochrysone carboxyl ACP thioesterase; part of the gene cluster that mediates the biosynthesis of geodin, an intermediate in the biosynthesis of other natural products. The pathway begins with the synthesis of atrochrysone thioester by the polyketide synthase (PKS) gedC. The atrochrysone carboxyl ACP thioesterase gedB then breaks the thioester bond and releases the atrochrysone carboxylic acid from gedC. The atrochrysone carboxylic acid is then converted to atrochrysone which is further transformed into emodinanthrone. The next step is performed by the emodinanthrone oxygenase gedH that catalyzes the oxidation of emodinanthrone to emodin. Emodin O-methyltransferase encoded probably by gedA then catalyzes methylation of the 8-hydroxy group of emodin to form questin. Ring cleavage of questin by questin oxidase gedK leads to desmethylsulochrin via several intermediates including questin epoxide. Another methylation step probably catalyzed by methyltransferase gedG leads to the formation of sulochrin which is further converted to dihydrogeodin by the sulochrin halogenase gedL. Finally, the dihydrogeodin oxidase gedJ catalyzes the stereospecific phenol oxidative coupling reaction converting dihydrogeodin to geodin. In Aspergillus terreus (strain NIH 2624 / FGSC A1156), this protein is Atrochrysone carboxyl ACP thioesterase.